The following is a 248-amino-acid chain: Tryptophan synthase alpha chain (248 aa).

Catalysis depends on proton acceptor residues Glu-36 and Asp-47.

This sequence belongs to the TrpA family. As to quaternary structure, tetramer of two alpha and two beta chains.

It catalyses the reaction (1S,2R)-1-C-(indol-3-yl)glycerol 3-phosphate + L-serine = D-glyceraldehyde 3-phosphate + L-tryptophan + H2O. Its pathway is amino-acid biosynthesis; L-tryptophan biosynthesis; L-tryptophan from chorismate: step 5/5. Functionally, the alpha subunit is responsible for the aldol cleavage of indoleglycerol phosphate to indole and glyceraldehyde 3-phosphate. The chain is Tryptophan synthase alpha chain from Pyrococcus abyssi (strain GE5 / Orsay).